The primary structure comprises 253 residues: Indole-3-glycerol phosphate synthase (253 aa).

It belongs to the TrpC family.

The enzyme catalyses 1-(2-carboxyphenylamino)-1-deoxy-D-ribulose 5-phosphate + H(+) = (1S,2R)-1-C-(indol-3-yl)glycerol 3-phosphate + CO2 + H2O. The protein operates within amino-acid biosynthesis; L-tryptophan biosynthesis; L-tryptophan from chorismate: step 4/5. The protein is Indole-3-glycerol phosphate synthase of Bacillus cereus (strain ATCC 10987 / NRS 248).